The chain runs to 153 residues: uncharacterized protein (153 aa).

An N-terminal signal peptide occupies residues 1–21; the sequence is MKITITSLLFFLVMIVELASA.

This is an uncharacterized protein from Saccharomyces cerevisiae (strain ATCC 204508 / S288c) (Baker's yeast).